The sequence spans 327 residues: GTPase Obg (327 aa).

The Obg domain occupies 2–160 (HILKDSLSIT…LNLRLELSLI (159 aa)). The region spanning 161-326 (ADIGLVGFPN…LVSELFALSR (166 aa)) is the OBG-type G domain. GTP contacts are provided by residues 167-174 (GFPNAGKS), 192-196 (FTTRF), 213-216 (DVPG), 280-283 (NKLD), and 307-309 (SIY). Mg(2+)-binding residues include Ser-174 and Thr-194.

Belongs to the TRAFAC class OBG-HflX-like GTPase superfamily. OBG GTPase family. In terms of assembly, monomer. It depends on Mg(2+) as a cofactor.

The protein resides in the cytoplasm. Its function is as follows. An essential GTPase which binds GTP, GDP and possibly (p)ppGpp with moderate affinity, with high nucleotide exchange rates and a fairly low GTP hydrolysis rate. Plays a role in control of the cell cycle, stress response, ribosome biogenesis and in those bacteria that undergo differentiation, in morphogenesis control. This Borrelia hermsii (strain HS1 / DAH) protein is GTPase Obg.